The chain runs to 458 residues: BPI fold-containing family B member 2 (458 aa).

Residues 1 to 20 (MAWASRLGLLLALLLPVVGA) form the signal peptide. Thr-52 is subject to Phosphothreonine; by FAM20C. The residue at position 60 (Ser-60) is a Phosphoserine; by FAM20C. N-linked (GlcNAc...) asparagine glycosylation is found at Asn-96, Asn-151, Asn-293, and Asn-332. Cysteines 137 and 174 form a disulfide.

This sequence belongs to the BPI/LBP/Plunc superfamily. BPI/LBP family. In terms of tissue distribution, highly expressed in tonsils, especially in hypertrophic tonsils. Detected at very low levels in fetal liver.

It is found in the secreted. This chain is BPI fold-containing family B member 2 (BPIFB2), found in Homo sapiens (Human).